Consider the following 728-residue polypeptide: Polyribonucleotide nucleotidyltransferase (728 aa).

Asp513 and Asp519 together coordinate Mg(2+). Positions 580-640 (PKVKMILIKP…EIVDLTVTYI (61 aa)) constitute a KH domain. Residues 650-724 (ENVYEVKILR…ERGQIDLSKK (75 aa)) enclose the S1 motif domain.

It belongs to the polyribonucleotide nucleotidyltransferase family. Mg(2+) is required as a cofactor.

Its subcellular location is the cytoplasm. It catalyses the reaction RNA(n+1) + phosphate = RNA(n) + a ribonucleoside 5'-diphosphate. Involved in mRNA degradation. Catalyzes the phosphorolysis of single-stranded polyribonucleotides processively in the 3'- to 5'-direction. This is Polyribonucleotide nucleotidyltransferase from Phytoplasma mali (strain AT).